The sequence spans 258 residues: 5-oxoprolinase subunit A (258 aa).

This sequence belongs to the LamB/PxpA family. As to quaternary structure, forms a complex composed of PxpA, PxpB and PxpC.

It carries out the reaction 5-oxo-L-proline + ATP + 2 H2O = L-glutamate + ADP + phosphate + H(+). Catalyzes the cleavage of 5-oxoproline to form L-glutamate coupled to the hydrolysis of ATP to ADP and inorganic phosphate. In Corynebacterium jeikeium (strain K411), this protein is 5-oxoprolinase subunit A.